The following is a 93-amino-acid chain: CRISPR-associated endoribonuclease Cas2 (93 aa).

A Mg(2+)-binding site is contributed by Asp13.

This sequence belongs to the CRISPR-associated endoribonuclease Cas2 protein family. Homodimer, forms a heterotetramer with a Cas1 homodimer. It depends on Mg(2+) as a cofactor.

In terms of biological role, CRISPR (clustered regularly interspaced short palindromic repeat), is an adaptive immune system that provides protection against mobile genetic elements (viruses, transposable elements and conjugative plasmids). CRISPR clusters contain sequences complementary to antecedent mobile elements and target invading nucleic acids. CRISPR clusters are transcribed and processed into CRISPR RNA (crRNA). Functions as a ssRNA-specific endoribonuclease. Involved in the integration of spacer DNA into the CRISPR cassette. The sequence is that of CRISPR-associated endoribonuclease Cas2 from Korarchaeum cryptofilum (strain OPF8).